The sequence spans 501 residues: Atypical kinase COQ8, mitochondrial (501 aa).

The N-terminal 29 residues, 1-29 (MVTNMVKLRNLRRLYCSSRLLRTIQNGRI), are a transit peptide targeting the mitochondrion. Positions 41-69 (YTTKSAKEGEENVERKHEEEKKDTLKSSS) are disordered. Residues 45 to 65 (SAKEGEENVERKHEEEKKDTL) show a composition bias toward basic and acidic residues. The KxGQ motif signature appears at 134–137 (KIGQ). Positions 188 to 501 (KFDKIPMAAA…LFKEIFAYKV (314 aa)) constitute a Protein kinase domain. Residues 195–198 (AAAS) carry the AAAS motif motif. ATP is bound by residues Ser198, Lys216, and 303–306 (MTRM). Asp346 (proton acceptor) is an active-site residue. ATP-binding residues include Asn351 and Asp365.

Belongs to the protein kinase superfamily. ADCK protein kinase family. Forms homopolymers. Predominantly associated with a complex of about 500 kDa.

It localises to the mitochondrion inner membrane. It participates in cofactor biosynthesis; ubiquinone biosynthesis. Functionally, atypical kinase involved in the biosynthesis of coenzyme Q, also named ubiquinone, an essential lipid-soluble electron transporter for aerobic cellular respiration. Its substrate specificity is still unclear: may act as a protein kinase that mediates phosphorylation of COQ3, COQ5 and/or COQ7. According to other reports, acts as a small molecule kinase, possibly a lipid kinase that phosphorylates a prenyl lipid in the ubiquinone biosynthesis pathway, as suggested by its ability to bind coenzyme Q lipid intermediates. This Saccharomyces cerevisiae (strain ATCC 204508 / S288c) (Baker's yeast) protein is Atypical kinase COQ8, mitochondrial (COQ8).